A 457-amino-acid polypeptide reads, in one-letter code: Neuropeptide receptor npr-1 (457 aa).

The Extracellular portion of the chain corresponds to 1–22 (MEVENFTDCQVYWKVYPDPSQS). A helical membrane pass occupies residues 23–43 (IYAIVPFLTVYLFLFFLGLFG). Topologically, residues 44 to 62 (NVTLIYVTCSHKALLSVQN) are cytoplasmic. A helical transmembrane segment spans residues 63–83 (IFILNLAASDCMMCILSLPIT). Topologically, residues 84-100 (PITNVYKNWYFGNLLCH) are extracellular. Residues Cys-99 and Cys-178 are joined by a disulfide bond. A helical membrane pass occupies residues 101 to 121 (LIPCIQGISIFVCTFSLGAIA). Residues 122 to 140 (LDRYILVVRPHSTPLSQRG) lie on the Cytoplasmic side of the membrane. A helical transmembrane segment spans residues 141 to 161 (AFLTTVLLWILSFVVTLPYAF). Topologically, residues 162–193 (NMQMIEYTEERICGYFCTEKWESAKSRRAYTM) are extracellular. The chain crosses the membrane as a helical span at residues 194-214 (IVMLAQFVVPFAVMAFCYANI). Over 215-279 (VSVLSKRAQT…LQNRRTTSIL (65 aa)) the chain is Cytoplasmic. Residues 280–300 (VTMVVWFGITWLPHNVISLII) form a helical membrane-spanning segment. The Extracellular segment spans residues 301-324 (EYDDTQSFFRLYGRDDYDISYLLN). The chain crosses the membrane as a helical span at residues 325 to 345 (LFTHSIAMSNNVLNPVLYAWL). Residues 346-457 (NPSFRQLVIK…IEFSVNDTLV (112 aa)) are Cytoplasmic-facing.

It belongs to the G-protein coupled receptor 1 family. In terms of tissue distribution, expressed in neurons, including neurons in the head, the ventral nerve cord, and the preanal ganglion.

It is found in the membrane. Functionally, G-protein coupled receptor for FARP(FMRFamide related peptide) neuropeptides. Activated by FARP neuropeptides flp-18 and flp-21. Plays a role in modulating social and feeding behavior. Required to modulate locomotion quiescence during the sleep-like state called lethargus, which occurs during molting between larval and adult stages, in part by regulating touch sensitivity. This is Neuropeptide receptor npr-1 from Caenorhabditis elegans.